The sequence spans 193 residues: Ribosome maturation factor RimM (193 aa).

One can recognise a PRC barrel domain in the interval 100 to 173 (DDEFYYADLE…TLLIDPLAAG (74 aa)).

The protein belongs to the RimM family. Binds ribosomal protein uS19.

The protein localises to the cytoplasm. An accessory protein needed during the final step in the assembly of 30S ribosomal subunit, possibly for assembly of the head region. Essential for efficient processing of 16S rRNA. May be needed both before and after RbfA during the maturation of 16S rRNA. It has affinity for free ribosomal 30S subunits but not for 70S ribosomes. The sequence is that of Ribosome maturation factor RimM from Rhizobium etli (strain CIAT 652).